The chain runs to 829 residues: Telomere length regulation protein TEL2 homolog (829 aa).

2 disordered regions span residues 446–493 (SADF…DDLV) and 620–641 (SEKP…PHSI). The span at 456–466 (SSPSKSPLSSP) shows a compositional bias: low complexity. Over residues 467–480 (EVREKSKVKVKADQ) the composition is skewed to basic and acidic residues. The segment covering 482-493 (SDSDLDSDDDLV) has biased composition (acidic residues). Polar residues predominate over residues 629-641 (AESGSVNTDPHSI).

Belongs to the TEL2 family.

Its subcellular location is the cytoplasm. The protein localises to the membrane. It localises to the nucleus. The protein resides in the chromosome. It is found in the telomere. Its function is as follows. Regulator of the DNA damage response (DDR). Part of the TTT complex that is required to stabilize protein levels of the phosphatidylinositol 3-kinase-related protein kinase (PIKK) family proteins. Promotes assembly, stabilizes and maintains the activity of TORC complexes, which regulate cell growth and survival in response to nutrient and hormonal signals. May be involved in telomere length regulation. In Xenopus tropicalis (Western clawed frog), this protein is Telomere length regulation protein TEL2 homolog (telo2).